A 308-amino-acid polypeptide reads, in one-letter code: uncharacterized protein (308 aa).

Leu-50, Asp-90, Asn-117, Tyr-182, Lys-186, Ile-222, and Thr-224 together coordinate NADP(+). Tyr-182 (proton acceptor) is an active-site residue. The Lowers pKa of active site Tyr role is filled by Lys-186.

It belongs to the short-chain dehydrogenases/reductases (SDR) family.

This is an uncharacterized protein from Saccharomyces cerevisiae (strain ATCC 204508 / S288c) (Baker's yeast).